The primary structure comprises 356 residues: Protein RecA (356 aa).

Residue 69-76 coordinates ATP; it reads GPESSGKT.

Belongs to the RecA family.

The protein resides in the cytoplasm. Its function is as follows. Can catalyze the hydrolysis of ATP in the presence of single-stranded DNA, the ATP-dependent uptake of single-stranded DNA by duplex DNA, and the ATP-dependent hybridization of homologous single-stranded DNAs. It interacts with LexA causing its activation and leading to its autocatalytic cleavage. This Gloeothece citriformis (strain PCC 7424) (Cyanothece sp. (strain PCC 7424)) protein is Protein RecA.